The following is a 264-amino-acid chain: Thymidylate synthase (264 aa).

DUMP is bound by residues Arg21 and 126–127 (RR). Cys146 functions as the Nucleophile in the catalytic mechanism. DUMP-binding positions include 166-169 (RSAD), Asn177, and 207-209 (HLY). Asp169 contributes to the (6R)-5,10-methylene-5,6,7,8-tetrahydrofolate binding site. Ala263 contacts (6R)-5,10-methylene-5,6,7,8-tetrahydrofolate.

This sequence belongs to the thymidylate synthase family. Bacterial-type ThyA subfamily. In terms of assembly, homodimer.

It is found in the cytoplasm. It carries out the reaction dUMP + (6R)-5,10-methylene-5,6,7,8-tetrahydrofolate = 7,8-dihydrofolate + dTMP. Its pathway is pyrimidine metabolism; dTTP biosynthesis. Catalyzes the reductive methylation of 2'-deoxyuridine-5'-monophosphate (dUMP) to 2'-deoxythymidine-5'-monophosphate (dTMP) while utilizing 5,10-methylenetetrahydrofolate (mTHF) as the methyl donor and reductant in the reaction, yielding dihydrofolate (DHF) as a by-product. This enzymatic reaction provides an intracellular de novo source of dTMP, an essential precursor for DNA biosynthesis. The polypeptide is Thymidylate synthase (Halorhodospira halophila (strain DSM 244 / SL1) (Ectothiorhodospira halophila (strain DSM 244 / SL1))).